The chain runs to 306 residues: Aspartate carbamoyltransferase catalytic subunit (306 aa).

Positions 55 and 56 each coordinate carbamoyl phosphate. Lys84 contributes to the L-aspartate binding site. Carbamoyl phosphate-binding residues include Arg105, His133, and Gln136. 2 residues coordinate L-aspartate: Arg166 and Arg227. Residues Leu265 and Pro266 each contribute to the carbamoyl phosphate site.

It belongs to the aspartate/ornithine carbamoyltransferase superfamily. ATCase family. As to quaternary structure, heterododecamer (2C3:3R2) of six catalytic PyrB chains organized as two trimers (C3), and six regulatory PyrI chains organized as three dimers (R2).

The enzyme catalyses carbamoyl phosphate + L-aspartate = N-carbamoyl-L-aspartate + phosphate + H(+). It functions in the pathway pyrimidine metabolism; UMP biosynthesis via de novo pathway; (S)-dihydroorotate from bicarbonate: step 2/3. Catalyzes the condensation of carbamoyl phosphate and aspartate to form carbamoyl aspartate and inorganic phosphate, the committed step in the de novo pyrimidine nucleotide biosynthesis pathway. The polypeptide is Aspartate carbamoyltransferase catalytic subunit (Neisseria gonorrhoeae (strain NCCP11945)).